We begin with the raw amino-acid sequence, 479 residues long: Zinc metalloproteinase/disintegrin (479 aa).

The signal sequence occupies residues 1 to 20; sequence MIQVLLVTICLAAFPYQGSS. Positions 21-187 are excised as a propeptide; the sequence is IILESGKVND…PIKKASQLIV (167 aa). One can recognise a Peptidase M12B domain in the interval 193–390; it reads RYMEIVIVVD…ENPPCILNKP (198 aa). Ca(2+) contacts are provided by glutamate 196 and aspartate 280. 3 disulfides stabilise this stretch: cysteine 304-cysteine 385, cysteine 344-cysteine 369, and cysteine 346-cysteine 352. Histidine 329 contributes to the Zn(2+) binding site. The active site involves glutamate 330. Residues histidine 333 and histidine 339 each contribute to the Zn(2+) site. Ca(2+) contacts are provided by cysteine 385 and asparagine 388. Positions 390–414 are excised as a propeptide; it reads PLRTDTVSTPVSGNELLEAGKDYDR. A Disintegrin domain is found at 398–479; it reads TPVSGNELLE…ADCPRNPYHA (82 aa). Disulfide bonds link cysteine 435–cysteine 441, cysteine 440–cysteine 465, and cysteine 453–cysteine 472. Residues 457-459 carry the Cell attachment site motif; it reads RGD.

It belongs to the venom metalloproteinase (M12B) family. P-II subfamily. P-IIa sub-subfamily. Monomer. Zn(2+) is required as a cofactor. Expressed by the venom gland.

It is found in the secreted. Snake venom metalloproteinase that impairs hemostasis in the envenomed animal. Its function is as follows. Inhibits platelet aggregation induced by ADP, thrombin, platelet-activating factor and collagen. Acts by inhibiting fibrinogen interaction with platelet receptors GPIIb/GPIIIa (ITGA2B/ITGB3). The sequence is that of Zinc metalloproteinase/disintegrin from Deinagkistrodon acutus (Hundred-pace snake).